The following is a 214-amino-acid chain: Protein OPG176 (214 aa).

This sequence belongs to the orthopoxvirus OPG176 family. As to quaternary structure, tetramer. Interacts with host MYD88, TRF4, TICAM2 and MAL.

Its function is as follows. BCL2-like protein which disrupts the host immune response by inhibiting the TLR4 signaling pathway leading to NF-kappa-B activation. Acts close to the plasma membrane and targets several host TIR-domain containing adapter proteins including MYD88, TIRAP, TRIF and TICAM2. In turn, blocks the host NF-kappa-B and TRIF-mediated IRF3 activation. This chain is Protein OPG176 (OPG176), found in Homo sapiens (Human).